The following is a 399-amino-acid chain: Coenzyme A biosynthesis bifunctional protein CoaBC (399 aa).

Residues 1–190 are phosphopantothenoylcysteine decarboxylase; sequence MQSLAGKKIL…FAPKILVGKR (190 aa). The active-site Proton donor is the cysteine 159. Positions 191–399 are phosphopantothenate--cysteine ligase; the sequence is VLITAGPTRE…AVMHLIHEQM (209 aa). CTP contacts are provided by residues aspartate 279, lysine 289, 307–310, phenylalanine 326, lysine 340, and lysine 344; that span reads PDIV.

It in the N-terminal section; belongs to the HFCD (homo-oligomeric flavin containing Cys decarboxylase) superfamily. In the C-terminal section; belongs to the PPC synthetase family. It depends on Mg(2+) as a cofactor. Requires FMN as cofactor.

The catalysed reaction is N-[(R)-4-phosphopantothenoyl]-L-cysteine + H(+) = (R)-4'-phosphopantetheine + CO2. It catalyses the reaction (R)-4'-phosphopantothenate + L-cysteine + CTP = N-[(R)-4-phosphopantothenoyl]-L-cysteine + CMP + diphosphate + H(+). It participates in cofactor biosynthesis; coenzyme A biosynthesis; CoA from (R)-pantothenate: step 2/5. Its pathway is cofactor biosynthesis; coenzyme A biosynthesis; CoA from (R)-pantothenate: step 3/5. In terms of biological role, catalyzes two sequential steps in the biosynthesis of coenzyme A. In the first step cysteine is conjugated to 4'-phosphopantothenate to form 4-phosphopantothenoylcysteine. In the second step the latter compound is decarboxylated to form 4'-phosphopantotheine. The polypeptide is Coenzyme A biosynthesis bifunctional protein CoaBC (Vibrio cholerae serotype O1 (strain ATCC 39315 / El Tor Inaba N16961)).